Here is a 211-residue protein sequence, read N- to C-terminus: Ion-translocating oxidoreductase complex subunit G (211 aa).

A helical transmembrane segment spans residues 9–29 (GLTLAIFACATTGLVALTQYL). An FMN phosphoryl threonine modification is found at T175.

Belongs to the RnfG family. As to quaternary structure, the complex is composed of six subunits: RnfA, RnfB, RnfC, RnfD, RnfE and RnfG. FMN serves as cofactor.

Its subcellular location is the cell inner membrane. Its function is as follows. Part of a membrane-bound complex that couples electron transfer with translocation of ions across the membrane. The protein is Ion-translocating oxidoreductase complex subunit G of Vibrio parahaemolyticus serotype O3:K6 (strain RIMD 2210633).